A 239-amino-acid polypeptide reads, in one-letter code: Probable transcriptional regulatory protein Tcr_1104 (239 aa).

The protein belongs to the TACO1 family.

The protein localises to the cytoplasm. The protein is Probable transcriptional regulatory protein Tcr_1104 of Hydrogenovibrio crunogenus (strain DSM 25203 / XCL-2) (Thiomicrospira crunogena).